A 513-amino-acid polypeptide reads, in one-letter code: Flavonoid 3'-monooxygenase (513 aa).

A helical membrane pass occupies residues 1–21; that stretch reads MATLFLTILLATVLFLILRIF. Over 22-513 the chain is Cytoplasmic; it reads SHRRNRSHNN…APNVYGLGSG (492 aa). Residue C445 participates in heme binding.

Belongs to the cytochrome P450 family. It depends on heme as a cofactor. In terms of tissue distribution, high expression in siliques and to a lower extent in stems, flowers and senescing leaves.

The protein localises to the endoplasmic reticulum membrane. It catalyses the reaction a 3'-unsubstituted flavone + reduced [NADPH--hemoprotein reductase] + O2 = a 3'-hydroxyflavone + oxidized [NADPH--hemoprotein reductase] + H2O + H(+). It participates in secondary metabolite biosynthesis; flavonoid biosynthesis. Functionally, catalyzes the 3'-hydroxylation of the flavonoid B-ring to the 3',4'-hydroxylated state. Convert naringenin to eriodictyol and dihydrokaempferol to dihydroquercetin. The chain is Flavonoid 3'-monooxygenase (CYP75B1) from Arabidopsis thaliana (Mouse-ear cress).